A 257-amino-acid polypeptide reads, in one-letter code: 5-oxoprolinase subunit A (257 aa).

This sequence belongs to the LamB/PxpA family. Forms a complex composed of PxpA, PxpB and PxpC.

It carries out the reaction 5-oxo-L-proline + ATP + 2 H2O = L-glutamate + ADP + phosphate + H(+). Functionally, catalyzes the cleavage of 5-oxoproline to form L-glutamate coupled to the hydrolysis of ATP to ADP and inorganic phosphate. This is 5-oxoprolinase subunit A from Natranaerobius thermophilus (strain ATCC BAA-1301 / DSM 18059 / JW/NM-WN-LF).